Reading from the N-terminus, the 150-residue chain is MQINTKNFGIIEYNPDDVIYFEEGIPGFEDLHNFLIITDNREDMPFKWLQAIDNTDIAFVVIDPRVFKPNYTFEIDEELIQALQIEDINHLLIYVIVVIPDEIEKMTANLKAPIIINAKNNKGKQAILDNDEYLIKHPILEELKNAYSNA.

Belongs to the FliW family. In terms of assembly, interacts with translational regulator CsrA and flagellin(s).

The protein resides in the cytoplasm. Functionally, acts as an anti-CsrA protein, binds CsrA and prevents it from repressing translation of its target genes, one of which is flagellin. Binds to flagellin and participates in the assembly of the flagellum. The protein is Flagellar assembly factor FliW of Thermoanaerobacter pseudethanolicus (strain ATCC 33223 / 39E) (Clostridium thermohydrosulfuricum).